The following is a 164-amino-acid chain: 6,7-dimethyl-8-ribityllumazine synthase (164 aa).

5-amino-6-(D-ribitylamino)uracil contacts are provided by residues F28, 62 to 64 (ALE), and 86 to 88 (AVI). 91-92 (ET) is a binding site for (2S)-2-hydroxy-3-oxobutyl phosphate. The active-site Proton donor is the H94. N119 is a 5-amino-6-(D-ribitylamino)uracil binding site. Position 133 (R133) interacts with (2S)-2-hydroxy-3-oxobutyl phosphate.

Belongs to the DMRL synthase family.

It carries out the reaction (2S)-2-hydroxy-3-oxobutyl phosphate + 5-amino-6-(D-ribitylamino)uracil = 6,7-dimethyl-8-(1-D-ribityl)lumazine + phosphate + 2 H2O + H(+). Its pathway is cofactor biosynthesis; riboflavin biosynthesis; riboflavin from 2-hydroxy-3-oxobutyl phosphate and 5-amino-6-(D-ribitylamino)uracil: step 1/2. Functionally, catalyzes the formation of 6,7-dimethyl-8-ribityllumazine by condensation of 5-amino-6-(D-ribitylamino)uracil with 3,4-dihydroxy-2-butanone 4-phosphate. This is the penultimate step in the biosynthesis of riboflavin. This is 6,7-dimethyl-8-ribityllumazine synthase from Nitrosomonas europaea (strain ATCC 19718 / CIP 103999 / KCTC 2705 / NBRC 14298).